A 162-amino-acid polypeptide reads, in one-letter code: Small ribosomal subunit protein bS16 (162 aa).

Residues 113–162 (ADGGPTTEATKPKKKSPAKKAAKAAEPAPQPEQPDTPALGGEQAELTAES) are disordered. Residues 124–134 (PKKKSPAKKAA) are compositionally biased toward basic residues.

Belongs to the bacterial ribosomal protein bS16 family.

The protein is Small ribosomal subunit protein bS16 of Mycobacterium tuberculosis (strain ATCC 25177 / H37Ra).